Reading from the N-terminus, the 734-residue chain is Photosystem I P700 chlorophyll a apoprotein A2 (734 aa).

8 consecutive transmembrane segments (helical) span residues 46 to 69, 135 to 158, 175 to 199, 273 to 291, 330 to 353, 369 to 395, 417 to 439, and 517 to 535; these read IFAS…FHVA, LYTG…LHLQ, LNHH…HVAI, IAHH…GHMY, IHFQ…QHMY, AALY…IFFI, AIIS…LYVH, and FLVH…LILV. Cysteine 559 and cysteine 568 together coordinate [4Fe-4S] cluster. A run of 2 helical transmembrane segments spans residues 575-596 and 643-665; these read AFYL…YWHW and LSVW…MFLI. Chlorophyll a-binding residues include histidine 654, methionine 662, and tyrosine 670. Tryptophan 671 serves as a coordination point for phylloquinone. A helical transmembrane segment spans residues 707–727; it reads LVGLAHFSVGYIFTYAAFLIA.

The protein belongs to the PsaA/PsaB family. The PsaA/B heterodimer binds the P700 chlorophyll special pair and subsequent electron acceptors. PSI consists of a core antenna complex that captures photons, and an electron transfer chain that converts photonic excitation into a charge separation. The eukaryotic PSI reaction center is composed of at least 11 subunits. P700 is a chlorophyll a/chlorophyll a' dimer, A0 is one or more chlorophyll a, A1 is one or both phylloquinones and FX is a shared 4Fe-4S iron-sulfur center. serves as cofactor.

The protein resides in the plastid. It localises to the chloroplast thylakoid membrane. The enzyme catalyses reduced [plastocyanin] + hnu + oxidized [2Fe-2S]-[ferredoxin] = oxidized [plastocyanin] + reduced [2Fe-2S]-[ferredoxin]. Functionally, psaA and PsaB bind P700, the primary electron donor of photosystem I (PSI), as well as the electron acceptors A0, A1 and FX. PSI is a plastocyanin-ferredoxin oxidoreductase, converting photonic excitation into a charge separation, which transfers an electron from the donor P700 chlorophyll pair to the spectroscopically characterized acceptors A0, A1, FX, FA and FB in turn. Oxidized P700 is reduced on the lumenal side of the thylakoid membrane by plastocyanin. The protein is Photosystem I P700 chlorophyll a apoprotein A2 of Agrostis stolonifera (Creeping bentgrass).